The chain runs to 351 residues: Nicotinate-nucleotide--dimethylbenzimidazole phosphoribosyltransferase (351 aa).

Glutamate 317 (proton acceptor) is an active-site residue.

This sequence belongs to the CobT family.

It catalyses the reaction 5,6-dimethylbenzimidazole + nicotinate beta-D-ribonucleotide = alpha-ribazole 5'-phosphate + nicotinate + H(+). It functions in the pathway nucleoside biosynthesis; alpha-ribazole biosynthesis; alpha-ribazole from 5,6-dimethylbenzimidazole: step 1/2. Functionally, catalyzes the synthesis of alpha-ribazole-5'-phosphate from nicotinate mononucleotide (NAMN) and 5,6-dimethylbenzimidazole (DMB). This chain is Nicotinate-nucleotide--dimethylbenzimidazole phosphoribosyltransferase, found in Ectopseudomonas mendocina (strain ymp) (Pseudomonas mendocina).